The primary structure comprises 513 residues: Noroxomaritidine synthase 2 (513 aa).

A helical membrane pass occupies residues 14–34; sequence HYPEILIAIACFLIFSLLLSA. Cys-458 contributes to the heme binding site.

The protein belongs to the cytochrome P450 family. It depends on heme as a cofactor.

The protein localises to the membrane. It catalyses the reaction 4'-O-methylnorbelladine + reduced [NADPH--hemoprotein reductase] + O2 = (10bR,4aS)-noroxomaritidine + oxidized [NADPH--hemoprotein reductase] + 2 H2O + H(+). The catalysed reaction is 4'-O-methylnorbelladine + reduced [NADPH--hemoprotein reductase] + O2 = (10bS,4aR)-noroxomaritidine + oxidized [NADPH--hemoprotein reductase] + 2 H2O + H(+). It functions in the pathway alkaloid biosynthesis. Its function is as follows. Cytochrome P450 that catalyzes an intramolecular para-para' C-C phenol coupling of 4'-O-methylnorbelladine in alkaloids biosynthesis, including haemanthamine- and crinamine-type alkaloids, promising anticancer agents. Catalyzes the formation of (10bR,4aS)-noroxomaritidine and (10bS,4aR)-noroxomaritidine from 4'-O-methylnorbelladine. The protein is Noroxomaritidine synthase 2 of Narcissus aff. pseudonarcissus MK-2014 (Daffodil).